Reading from the N-terminus, the 217-residue chain is dITP/XTP pyrophosphatase (217 aa).

7 to 12 (SRNKKK) contacts substrate. Residue Asp72 is the Proton acceptor of the active site. A Mg(2+)-binding site is contributed by Asp72. Substrate contacts are provided by residues Ser73, 163 to 166 (FGYD), Lys195, and 200 to 201 (HR).

Belongs to the HAM1 NTPase family. Homodimer. It depends on Mg(2+) as a cofactor.

The catalysed reaction is XTP + H2O = XMP + diphosphate + H(+). The enzyme catalyses dITP + H2O = dIMP + diphosphate + H(+). It catalyses the reaction ITP + H2O = IMP + diphosphate + H(+). Its function is as follows. Pyrophosphatase that catalyzes the hydrolysis of nucleoside triphosphates to their monophosphate derivatives, with a high preference for the non-canonical purine nucleotides XTP (xanthosine triphosphate), dITP (deoxyinosine triphosphate) and ITP. Seems to function as a house-cleaning enzyme that removes non-canonical purine nucleotides from the nucleotide pool, thus preventing their incorporation into DNA/RNA and avoiding chromosomal lesions. The protein is dITP/XTP pyrophosphatase of Corynebacterium jeikeium (strain K411).